We begin with the raw amino-acid sequence, 692 residues long: 5-taurinomethyluridine-[tRNA] synthase subunit MTO1, mitochondrial (692 aa).

Residues 1–25 (MFYFRGCGRWVAASFTKLQFPLARL) constitute a mitochondrion transit peptide. Residues 43-48 (GGGHAG), Val-155, Ser-218, and Gln-407 each bind FAD. Lys-508 carries the post-translational modification N6-methyllysine.

It belongs to the MnmG family. Homodimer; forms a dimer in the presence of potassium. Interacts with GTPBP3; forms the GTPBP3-MTO1 complex composed of homodimers of GTPBP3 and MTO1. The cofactor is FAD.

It localises to the mitochondrion. It carries out the reaction 5,10-methylenetetrahydrofolate + uridine(34) in tRNA + taurine + GTP + A + H2O = 5-taurinomethyluridine(34) in tRNA + 7,8-dihydrofolate + GDP + AH2 + phosphate + H(+). In terms of biological role, component of the GTPBP3-MTO1 complex that catalyzes the 5-taurinomethyluridine (taum(5)U) modification at the 34th wobble position (U34) of mitochondrial tRNAs (mt-tRNAs), which plays a role in mt-tRNA decoding and mitochondrial translation. Taum(5)U formation on mammalian mt-tRNA requires the presence of both GTPBP3-mediated GTPase activity and MTO1 catalytic activity. The protein is 5-taurinomethyluridine-[tRNA] synthase subunit MTO1, mitochondrial (MTO1) of Pongo abelii (Sumatran orangutan).